The sequence spans 248 residues: Anamorsin homolog (248 aa).

The N-terminal SAM-like domain stretch occupies residues 4–129 (FKGLQKSLYI…ETGSSARLSF (126 aa)). Positions 130-161 (AKKNASAVNVWKISGDDEELIDEEELLDEEDK) are linker. [2Fe-2S] cluster contacts are provided by Cys-172, Cys-181, Cys-184, and Cys-186. The segment at 172–186 (CSTTGKRKACKNCSC) is fe-S binding site A. Positions 209, 212, 220, and 223 each coordinate [4Fe-4S] cluster. Short sequence motifs (cx2C motif) lie at residues 209–212 (CGNC) and 220–223 (CSTC). The fe-S binding site B stretch occupies residues 209–223 (CGNCYLGDAFRCSTC).

It belongs to the anamorsin family. As to quaternary structure, monomer. [2Fe-2S] cluster serves as cofactor. [4Fe-4S] cluster is required as a cofactor.

It localises to the cytoplasm. It is found in the mitochondrion intermembrane space. Component of the cytosolic iron-sulfur (Fe-S) protein assembly (CIA) machinery. Required for the maturation of extramitochondrial Fe-S proteins. Part of an electron transfer chain functioning in an early step of cytosolic Fe-S biogenesis, facilitating the de novo assembly of a [4Fe-4S] cluster on the cytosolic Fe-S scaffold complex. Electrons are transferred from NADPH via a FAD- and FMN-containing diflavin oxidoreductase. Together with the diflavin oxidoreductase, also required for the assembly of the diferric tyrosyl radical cofactor of ribonucleotide reductase (RNR), probably by providing electrons for reduction during radical cofactor maturation in the catalytic small subunit. The protein is Anamorsin homolog of Drosophila melanogaster (Fruit fly).